Here is a 321-residue protein sequence, read N- to C-terminus: Fructose-1,6-bisphosphatase 2 class 2 (321 aa).

Asp32, Glu56, Asp84, and Glu87 together coordinate Mn(2+). Substrate-binding positions include Glu87–Thr89, Tyr118, Lys163–Arg165, Asp185–Asp187, and Gly209. Glu212 is a Mn(2+) binding site.

The protein belongs to the FBPase class 2 family. Homodimer. It depends on Mn(2+) as a cofactor.

The enzyme catalyses beta-D-fructose 1,6-bisphosphate + H2O = beta-D-fructose 6-phosphate + phosphate. With respect to regulation, competitively inhibited by low concentrations of phosphate (IC50 of 1.2 mM) and is also sensitive to Li(+) (IC50 of 15.8 mM). Also inhibited by 1 mM ATP or 50 mM KCl (60% and 20% residual activity, respectively). Slightly activated (40-50%) by the addition of 1 mM dithiothreitol in vitro. Catalyzes the hydrolysis of fructose 1,6-bisphosphate to fructose 6-phosphate. Also displays a low activity toward glucose 1,6-bisphosphate, and no activity against ribulose 1,5-bisphosphate, fructose 2,6-bisphosphate, or fructose 1-phosphate. This is Fructose-1,6-bisphosphatase 2 class 2 (yggF) from Escherichia coli (strain K12).